Reading from the N-terminus, the 289-residue chain is Cyclo(L-tyrosyl-L-tyrosyl) synthase (289 aa).

A disordered region spans residues 1-48; that stretch reads MSYVAAEPGVLISPTDDLQSPRSAPAAHDENADGITGGTRDDSAPNSR. S88 serves as the catalytic Nucleophile. Substrate-binding positions include N91, 229-233, and Y253; that span reads YICAE.

The protein belongs to the CDPS family. In terms of assembly, homodimer.

It catalyses the reaction 2 L-tyrosyl-tRNA(Tyr) = cyclo(L-tyrosyl-L-tyrosyl) + 2 tRNA(Tyr). Involved in the biosynthesis of mycocyclosin. It uses activated amino acids in the form of aminoacyl-tRNAs (aa-tRNAs) as substrates to catalyze the ATP-independent formation of cyclodipeptides which are intermediates in diketopiperazine (DKP) biosynthetic pathways. Catalyzes the formation of cyclo(L-Tyr-L-Tyr) (cYY) from L-tyrosyl-tRNA(Tyr). This chain is Cyclo(L-tyrosyl-L-tyrosyl) synthase, found in Mycobacterium tuberculosis (strain CDC 1551 / Oshkosh).